The primary structure comprises 361 residues: MAGNSIGQVFRVTTFGESHGAALGCIVDGVPPGMALSEADLQHDLDRRRPGASRYTTARREADRVRILSGVFEGVTTGTSIGLLIENTDQRSQDYSAIKDLFRPGHADYSYEQKYGLRDYRGGGRSSARETAMRVAAGAIAKKYLQQQHGIVIRACLSRMGDIVCRQYDWAQVEQNPFFCPDAQQLEALDALMRDLKKCGDSIGAEVTVMATGVPPGLGDPVFDRLDADLAHALMSINAVKGVEIGDGFAVVGQRGSEHRDEISPSGFLSNHAGGILGGISSGQPLLARLALKPTSSIMVPGQTITRAGEATTIVTHGRHDPCVGIRAVPIAEAMMALVLMDHLLRQRAQCADVACTVPRW.

Arg48 and Arg54 together coordinate NADP(+). FMN-binding positions include 125–127 (RSS), 238–239 (NA), Gly278, 293–297 (KPTSS), and Arg319.

Belongs to the chorismate synthase family. In terms of assembly, homotetramer. Requires FMNH2 as cofactor.

The enzyme catalyses 5-O-(1-carboxyvinyl)-3-phosphoshikimate = chorismate + phosphate. The protein operates within metabolic intermediate biosynthesis; chorismate biosynthesis; chorismate from D-erythrose 4-phosphate and phosphoenolpyruvate: step 7/7. Its function is as follows. Catalyzes the anti-1,4-elimination of the C-3 phosphate and the C-6 proR hydrogen from 5-enolpyruvylshikimate-3-phosphate (EPSP) to yield chorismate, which is the branch point compound that serves as the starting substrate for the three terminal pathways of aromatic amino acid biosynthesis. This reaction introduces a second double bond into the aromatic ring system. The chain is Chorismate synthase from Edwardsiella ictaluri (strain 93-146).